The chain runs to 155 residues: D-aminoacyl-tRNA deacylase (155 aa).

Positions 137-138 (GP) match the Gly-cisPro motif, important for rejection of L-amino acids motif.

It belongs to the DTD family. In terms of assembly, homodimer.

It localises to the cytoplasm. It carries out the reaction glycyl-tRNA(Ala) + H2O = tRNA(Ala) + glycine + H(+). The enzyme catalyses a D-aminoacyl-tRNA + H2O = a tRNA + a D-alpha-amino acid + H(+). Functionally, an aminoacyl-tRNA editing enzyme that deacylates mischarged D-aminoacyl-tRNAs. Also deacylates mischarged glycyl-tRNA(Ala), protecting cells against glycine mischarging by AlaRS. Acts via tRNA-based rather than protein-based catalysis; rejects L-amino acids rather than detecting D-amino acids in the active site. By recycling D-aminoacyl-tRNA to D-amino acids and free tRNA molecules, this enzyme counteracts the toxicity associated with the formation of D-aminoacyl-tRNA entities in vivo and helps enforce protein L-homochirality. The chain is D-aminoacyl-tRNA deacylase from Nitrosococcus oceani (strain ATCC 19707 / BCRC 17464 / JCM 30415 / NCIMB 11848 / C-107).